An 88-amino-acid chain; its full sequence is Putative membrane protein insertion efficiency factor (88 aa).

A disordered region spans residues Asp66–His88. Residues Pro69 to Cys82 show a composition bias toward basic and acidic residues.

This sequence belongs to the UPF0161 family.

Its subcellular location is the cell membrane. Could be involved in insertion of integral membrane proteins into the membrane. This Listeria monocytogenes serotype 4b (strain CLIP80459) protein is Putative membrane protein insertion efficiency factor.